Reading from the N-terminus, the 264-residue chain is NAD-capped RNA hydrolase NudC (264 aa).

Residue arginine 70 participates in substrate binding. The Zn(2+) site is built by cysteine 99 and cysteine 102. Glutamate 112 is a binding site for substrate. Zn(2+)-binding residues include cysteine 117 and cysteine 120. Tyrosine 125 contributes to the substrate binding site. Positions 126–253 constitute a Nudix hydrolase domain; that stretch reads PVICPSIIVA…TIARKLIHVT (128 aa). A divalent metal cation-binding residues include alanine 162, glutamate 178, and glutamate 182. The Nudix box motif lies at 163–184; it reads GFVEVGETFEQAVQREVFEETG. Position 196 to 203 (196 to 203) interacts with substrate; the sequence is QPWAFPNS. Residue glutamate 223 coordinates a divalent metal cation. Alanine 246 lines the substrate pocket.

Belongs to the Nudix hydrolase family. NudC subfamily. Homodimer. Mg(2+) serves as cofactor. The cofactor is Mn(2+). It depends on Zn(2+) as a cofactor.

It carries out the reaction a 5'-end NAD(+)-phospho-ribonucleoside in mRNA + H2O = a 5'-end phospho-adenosine-phospho-ribonucleoside in mRNA + beta-nicotinamide D-ribonucleotide + 2 H(+). The enzyme catalyses NAD(+) + H2O = beta-nicotinamide D-ribonucleotide + AMP + 2 H(+). It catalyses the reaction NADH + H2O = reduced beta-nicotinamide D-ribonucleotide + AMP + 2 H(+). MRNA decapping enzyme that specifically removes the nicotinamide adenine dinucleotide (NAD) cap from a subset of mRNAs by hydrolyzing the diphosphate linkage to produce nicotinamide mononucleotide (NMN) and 5' monophosphate mRNA. The NAD-cap is present at the 5'-end of some mRNAs and stabilizes RNA against 5'-processing. Has preference for mRNAs with a 5'-end purine. Catalyzes the hydrolysis of a broad range of dinucleotide pyrophosphates. In Haemophilus influenzae (strain 86-028NP), this protein is NAD-capped RNA hydrolase NudC.